The sequence spans 390 residues: Elongation factor Ts, mitochondrial (390 aa).

It belongs to the EF-Ts family.

Its subcellular location is the mitochondrion. Associates with the EF-Tu.GDP complex and induces the exchange of GDP to GTP. It remains bound to the aminoacyl-tRNA.EF-Tu.GTP complex up to the GTP hydrolysis stage on the ribosome. This is Elongation factor Ts, mitochondrial from Plasmodium vivax (strain Salvador I).